A 506-amino-acid chain; its full sequence is Sucrose transport protein SUT3 (506 aa).

Over 1-20 (MAVDMELDGGGDGKGKAPPQ) the chain is Cytoplasmic. Residues 21-41 (ISLSGLFLACMVAGGVQYGWA) traverse the membrane as a helical segment. Over 42 to 54 (LQLSLLTPYIQTL) the chain is Extracellular. Residues 55-75 (GIPHALTSVMWLCGPIAGLIV) traverse the membrane as a helical segment. Residues 76-94 (QPCVGLYSDKCTSSLGRRR) lie on the Cytoplasmic side of the membrane. Residues 95–115 (PFILTGCIIICISVIVIGFSS) form a helical membrane-spanning segment. Topologically, residues 116-135 (DIGYALGDATEDCKVYRGPR) are extracellular. The chain crosses the membrane as a helical span at residues 136 to 156 (YHAAAAFILGFWLLDFSNNTV). Residues 157-171 (QGPARALMADLSGRH) lie on the Cytoplasmic side of the membrane. Residues 172-192 (GPSAANAIFCSWMALGNILGY) traverse the membrane as a helical segment. Topologically, residues 193-220 (SSGSTNDWHKWFPFLMTRACCEACANLK) are extracellular. A helical membrane pass occupies residues 221 to 241 (AAFLVAVVFLGLSTAVTMVFA). The Cytoplasmic portion of the chain corresponds to 242-275 (REVALDPVAAAKRNEGEASGPLAVFKGMKNLPVG). The helical transmembrane segment at 276–296 (MPSVLIVTGLTWLSWFPFILF) threads the bilayer. Residues 297-327 (DTDWMGREIYHGRPDGSPAEVTAFQEGVRQG) are Extracellular-facing. A helical membrane pass occupies residues 328–348 (AFGLLLNSIVLGISSFLIEPM). At 349–355 (CRRLGAR) the chain is on the cytoplasmic side. A helical transmembrane segment spans residues 356-376 (AVWVMSSAVVCVAMAAVSVLS). Residues 377-404 (AWSLGDFGGSVQDAARAPAEEGGVRASA) are Extracellular-facing. The chain crosses the membrane as a helical span at residues 405–425 (LALFVFLGLPFAVLCSVPFAV). Over 426-441 (TAQLTASRGGGQGLCT) the chain is Cytoplasmic. The chain crosses the membrane as a helical span at residues 442 to 462 (GVLNISIVVPQMAIALGAGPW). The Extracellular segment spans residues 463 to 470 (DELFGEGN). Residues 471-491 (IPAFAMASVFAAAAAAAGVVL) form a helical membrane-spanning segment. The Cytoplasmic segment spans residues 492–506 (LPKVSVRSVSMAGGH).

Belongs to the glycoside-pentoside-hexuronide (GPH) cation symporter transporter (TC 2.A.2.4) family. In terms of assembly, homodimer.

The protein resides in the cell membrane. It participates in glycan biosynthesis; sucrose metabolism. Responsible for the transport of sucrose into the cell, with the concomitant uptake of protons (symport system). May also transport other glucosides. In Oryza sativa subsp. indica (Rice), this protein is Sucrose transport protein SUT3 (SUT3).